A 130-amino-acid polypeptide reads, in one-letter code: Ribonuclease P protein component (130 aa).

It belongs to the RnpA family. Consists of a catalytic RNA component (M1 or rnpB) and a protein subunit.

It carries out the reaction Endonucleolytic cleavage of RNA, removing 5'-extranucleotides from tRNA precursor.. RNaseP catalyzes the removal of the 5'-leader sequence from pre-tRNA to produce the mature 5'-terminus. It can also cleave other RNA substrates such as 4.5S RNA. The protein component plays an auxiliary but essential role in vivo by binding to the 5'-leader sequence and broadening the substrate specificity of the ribozyme. The chain is Ribonuclease P protein component from Psychrobacter sp. (strain PRwf-1).